The primary structure comprises 429 residues: Enolase (429 aa).

Gln163 contributes to the (2R)-2-phosphoglycerate binding site. The Proton donor role is filled by Glu205. Mg(2+) is bound by residues Asp242, Glu287, and Asp314. (2R)-2-phosphoglycerate is bound by residues Lys339, Arg368, Ser369, and Lys390. Lys339 serves as the catalytic Proton acceptor.

This sequence belongs to the enolase family. The cofactor is Mg(2+).

It localises to the cytoplasm. The protein localises to the secreted. The protein resides in the cell surface. The enzyme catalyses (2R)-2-phosphoglycerate = phosphoenolpyruvate + H2O. It participates in carbohydrate degradation; glycolysis; pyruvate from D-glyceraldehyde 3-phosphate: step 4/5. Catalyzes the reversible conversion of 2-phosphoglycerate (2-PG) into phosphoenolpyruvate (PEP). It is essential for the degradation of carbohydrates via glycolysis. This is Enolase from Magnetococcus marinus (strain ATCC BAA-1437 / JCM 17883 / MC-1).